The chain runs to 478 residues: Cytochrome c-552 (478 aa).

The first 26 residues, M1–A26, serve as a signal peptide directing secretion. Residue H94 coordinates heme c. The heme site is built by C122, C125, and K126. 6 residues coordinate heme c: C160, C163, H164, C209, C212, and H213. Ca(2+)-binding residues include E215, Y216, K261, and Q263. Substrate is bound at residue Y216. H264 contacts substrate. 9 residues coordinate heme c: H275, C282, C285, H286, H301, C314, C317, H318, and H393.

The protein belongs to the cytochrome c-552 family. It depends on Ca(2+) as a cofactor. Requires heme c as cofactor.

The protein resides in the periplasm. It carries out the reaction 6 Fe(III)-[cytochrome c] + NH4(+) + 2 H2O = 6 Fe(II)-[cytochrome c] + nitrite + 8 H(+). It participates in nitrogen metabolism; nitrate reduction (assimilation). Functionally, catalyzes the reduction of nitrite to ammonia, consuming six electrons in the process. This chain is Cytochrome c-552, found in Escherichia coli O157:H7 (strain EC4115 / EHEC).